Here is a 348-residue protein sequence, read N- to C-terminus: Protein RecA (348 aa).

An ATP-binding site is contributed by 69-76; it reads GPESSGKT.

It belongs to the RecA family.

The protein resides in the cytoplasm. Can catalyze the hydrolysis of ATP in the presence of single-stranded DNA, the ATP-dependent uptake of single-stranded DNA by duplex DNA, and the ATP-dependent hybridization of homologous single-stranded DNAs. It interacts with LexA causing its activation and leading to its autocatalytic cleavage. The chain is Protein RecA from Gluconacetobacter polyoxogenes (Acetobacter polyoxogenes).